The sequence spans 550 residues: Eukaryotic translation initiation factor 3 subunit D-2 (550 aa).

A disordered region spans residues 108–152 (RTRGRTGRGTPNIASLGGSTAGGATASTTKYGKGRHTRNTQNVGR). A compositionally biased stretch (low complexity) spans 115-136 (RGTPNIASLGGSTAGGATASTT). The RNA gate stretch occupies residues 290–304 (QFDLLTVNETSVEPP). Residues 527 to 550 (PENAFDSDRDEEESSEPLSNSNDN) form a disordered region.

It belongs to the eIF-3 subunit D family. Component of the eukaryotic translation initiation factor 3 (eIF-3) complex. The eIF-3 complex interacts with pix.

The protein localises to the cytoplasm. In terms of biological role, mRNA cap-binding component of the eukaryotic translation initiation factor 3 (eIF-3) complex, which is involved in protein synthesis of a specialized repertoire of mRNAs and, together with other initiation factors, stimulates binding of mRNA and methionyl-tRNAi to the 40S ribosome. The eIF-3 complex specifically targets and initiates translation of a subset of mRNAs involved in cell proliferation. In the eIF-3 complex, eif3d specifically recognizes and binds the 7-methylguanosine cap of a subset of mRNAs. This Drosophila sechellia (Fruit fly) protein is Eukaryotic translation initiation factor 3 subunit D-2.